The sequence spans 77 residues: DNA-directed RNA polymerase subunit epsilon (77 aa).

The protein belongs to the RNA polymerase subunit epsilon family. RNAP is composed of a core of 2 alpha, a beta and a beta' subunit. The core is associated with a delta subunit, and at least one of epsilon or omega. When a sigma factor is associated with the core the holoenzyme is formed, which can initiate transcription.

It carries out the reaction RNA(n) + a ribonucleoside 5'-triphosphate = RNA(n+1) + diphosphate. A non-essential component of RNA polymerase (RNAP). This Lactobacillus delbrueckii subsp. bulgaricus (strain ATCC 11842 / DSM 20081 / BCRC 10696 / JCM 1002 / NBRC 13953 / NCIMB 11778 / NCTC 12712 / WDCM 00102 / Lb 14) protein is DNA-directed RNA polymerase subunit epsilon.